A 623-amino-acid polypeptide reads, in one-letter code: Lamin-B2.L (623 aa).

The span at 1–18 shows a compositional bias: low complexity; that stretch reads MATTTPSRSTRSSMQSPA. The disordered stretch occupies residues 1–30; sequence MATTTPSRSTRSSMQSPARGTSTPLSPTRI. A head region spans residues 2–27; sequence ATTTPSRSTRSSMQSPARGTSTPLSP. A compositionally biased stretch (polar residues) spans 19 to 30; that stretch reads RGTSTPLSPTRI. The residue at position 26 (S26) is a Phosphoserine. A coil 1A region spans residues 28 to 64; it reads TRISRLQEKEELRHLNDRLAVYIDRVRALELENDRLM. Residues 35-391 enclose the IF rod domain; sequence EKEELRHLND…KLLEGEEERL (357 aa). The segment at 64–74 is linker 1; it reads MVKISEKEEVT. Positions 75–211 are coil 1B; the sequence is TREVSGIKNL…QSLQEEMDFR (137 aa). The tract at residues 212–235 is linker 2; that stretch reads KNIYEEESRETRKRHERRIVEVDR. The coil 2 stretch occupies residues 236–378; that stretch reads GHHYDYESKL…VKLALDLEIN (143 aa). The tail stretch occupies residues 380-592; it reads YRKLLEGEEE…VTKSVLRNVE (213 aa). Disordered stretches follow at residues 388–473 and 591–623; these read EERL…LSQQ and VEEE…CSVM. S396 carries the post-translational modification Phosphoserine. Residues 398-416 show a composition bias toward low complexity; the sequence is ESRVTVSRATSSSSSATRT. The Nuclear localization signal motif lies at 420-425; it reads KRRRVE. The span at 443–473 shows a compositional bias: polar residues; sequence LGSSRITASEGSSRTITSGQSSTTRFHLSQQ. One can recognise an LTD domain in the interval 468-585; it reads FHLSQQASAT…EEVAVRTVTK (118 aa). Positions 592 to 604 are enriched in acidic residues; it reads EEEEDEDADFGEE. Positions 612–623 are enriched in polar residues; sequence DPRTTSRGCSVM. Position 620 is a cysteine methyl ester (C620). C620 is lipidated: S-farnesyl cysteine. A propeptide spans 621 to 623 (removed in mature form); the sequence is SVM.

This sequence belongs to the intermediate filament family. Post-translationally, phosphorylation plays a key role in lamin organization, subcellular localization and nuclear envelope disintegration. Phosphorylation by CDK1 at Ser-26 at the onset of mitosis drives lamin disassembly and nuclear envelope breakdown.

It is found in the nucleus lamina. Its subcellular location is the nucleus envelope. The protein resides in the nucleus. The protein localises to the nucleoplasm. It localises to the nucleus matrix. Functionally, lamins are intermediate filament proteins that assemble into a filamentous meshwork, and which constitute the major components of the nuclear lamina, a fibrous layer on the nucleoplasmic side of the inner nuclear membrane. Lamins provide a framework for the nuclear envelope, bridging the nuclear envelope and chromatin, thereby playing an important role in nuclear assembly, chromatin organization, nuclear membrane and telomere dynamics. The structural integrity of the lamina is strictly controlled by the cell cycle, as seen by the disintegration and formation of the nuclear envelope in prophase and telophase, respectively. This chain is Lamin-B2.L (lmnb2.L), found in Xenopus laevis (African clawed frog).